Here is a 554-residue protein sequence, read N- to C-terminus: Glucose-6-phosphate isomerase (554 aa).

The active-site Proton donor is the Glu-359. Active-site residues include His-390 and Lys-518.

This sequence belongs to the GPI family.

The protein localises to the cytoplasm. It catalyses the reaction alpha-D-glucose 6-phosphate = beta-D-fructose 6-phosphate. It participates in carbohydrate biosynthesis; gluconeogenesis. It functions in the pathway carbohydrate degradation; glycolysis; D-glyceraldehyde 3-phosphate and glycerone phosphate from D-glucose: step 2/4. Its function is as follows. Catalyzes the reversible isomerization of glucose-6-phosphate to fructose-6-phosphate. The protein is Glucose-6-phosphate isomerase of Pseudomonas syringae pv. tomato (strain ATCC BAA-871 / DC3000).